We begin with the raw amino-acid sequence, 423 residues long: MLFERARQVFPGGVNSPARALKHLPSSLVARAASGPYLYTDRGRLVDYCMAFGAIILGHAHPRVKRAVEEQLERGWIYALLTEQEVEFAEAIRRHMPSVEKMRIVNTGTEATMNAIRLARGYTKRDVIIKFDGNFHGSHDYVLVKAGSGAATWGIPTSAGVPQDVVKLTVVAPYNDVDAFLKAVKEVGDRLAAVIAEPVAGNYGLIIPDAEFLKALREETKRVGALLIFDEVITGFRLGLGGAQGRFGIRPDLTTLGKAVGGGFPIGIFGGRAEVMDLVAPSGPVYNAGTYNAHPVSVTAGLAVLKELETGEPFRTADEAAERLAKGIEDIAGRLGFDVVVKKIASMFQFYFKKGDVKTPQDVRESNEKMYLKLHEIALRHGVYLTPSQFEVNFTSAAHTREVVEETLAALEKAFQQLKTEIG.

The residue at position 258 (Lys258) is an N6-(pyridoxal phosphate)lysine.

Belongs to the class-III pyridoxal-phosphate-dependent aminotransferase family. HemL subfamily. It depends on pyridoxal 5'-phosphate as a cofactor.

Its subcellular location is the cytoplasm. It catalyses the reaction (S)-4-amino-5-oxopentanoate = 5-aminolevulinate. It participates in porphyrin-containing compound metabolism; protoporphyrin-IX biosynthesis; 5-aminolevulinate from L-glutamyl-tRNA(Glu): step 2/2. In Pyrobaculum arsenaticum (strain DSM 13514 / JCM 11321 / PZ6), this protein is Glutamate-1-semialdehyde 2,1-aminomutase.